We begin with the raw amino-acid sequence, 1023 residues long: 1-phosphatidylinositol 4,5-bisphosphate phosphodiesterase beta-4 (1023 aa).

Residues 149–299 enclose the PI-PLC X-box domain; it reads QEMDHPLAHY…LKRKILIKKQ (151 aa). Active-site residues include H164 and H211. The 117-residue stretch at 413–529 folds into the PI-PLC Y-box domain; the sequence is LSTMINYAQP…GYLLKPDFMR (117 aa). One can recognise a C2 domain in the interval 532–657; sequence DRTFDPFSET…SLRNEGNKPL (126 aa). 2 disordered regions span residues 711 to 742 and 930 to 958; these read ADVP…SELR and KISM…VREL. 2 stretches are compositionally biased toward polar residues: residues 729 to 742 and 933 to 942; these read AKAN…SELR and MENSKAISQD. At T734 the chain carries Phosphothreonine. Positions 943–957 are enriched in basic and acidic residues; the sequence is KSIKNKAERERRVRE.

Ca(2+) serves as cofactor. In terms of processing, the N-terminus is blocked. As to expression, preferentially expressed in the retina.

The protein resides in the cell membrane. It catalyses the reaction a 1,2-diacyl-sn-glycero-3-phospho-(1D-myo-inositol-4,5-bisphosphate) + H2O = 1D-myo-inositol 1,4,5-trisphosphate + a 1,2-diacyl-sn-glycerol + H(+). It carries out the reaction a 1,2-diacyl-sn-glycero-3-phospho-(1D-myo-inositol) + H2O = 1D-myo-inositol 1-phosphate + a 1,2-diacyl-sn-glycerol + H(+). Activated phosphatidylinositol-specific phospholipase C enzymes catalyze the production of the second messenger molecules diacylglycerol (DAG) and inositol 1,4,5-trisphosphate (IP3) involved in G-protein coupled receptor signaling pathways. PLCB4 is a direct effector of the endothelin receptor signaling pathway that plays an essential role in lower jaw and middle ear structures development. In Bos taurus (Bovine), this protein is 1-phosphatidylinositol 4,5-bisphosphate phosphodiesterase beta-4 (PLCB4).